Here is a 268-residue protein sequence, read N- to C-terminus: Tryptophan synthase alpha chain (268 aa).

Active-site proton acceptor residues include Glu49 and Asp60.

This sequence belongs to the TrpA family. In terms of assembly, tetramer of two alpha and two beta chains.

It catalyses the reaction (1S,2R)-1-C-(indol-3-yl)glycerol 3-phosphate + L-serine = D-glyceraldehyde 3-phosphate + L-tryptophan + H2O. The protein operates within amino-acid biosynthesis; L-tryptophan biosynthesis; L-tryptophan from chorismate: step 5/5. Functionally, the alpha subunit is responsible for the aldol cleavage of indoleglycerol phosphate to indole and glyceraldehyde 3-phosphate. The sequence is that of Tryptophan synthase alpha chain from Xylella fastidiosa (strain 9a5c).